The following is a 1423-amino-acid chain: DNA-directed RNA polymerase subunit beta' (1423 aa).

Zn(2+) is bound by residues cysteine 71, cysteine 73, cysteine 86, and cysteine 89. Mg(2+) contacts are provided by aspartate 461, aspartate 463, and aspartate 465. Zn(2+)-binding residues include cysteine 815, cysteine 889, cysteine 896, and cysteine 899.

It belongs to the RNA polymerase beta' chain family. As to quaternary structure, the RNAP catalytic core consists of 2 alpha, 1 beta, 1 beta' and 1 omega subunit. When a sigma factor is associated with the core the holoenzyme is formed, which can initiate transcription. Requires Mg(2+) as cofactor. The cofactor is Zn(2+).

The enzyme catalyses RNA(n) + a ribonucleoside 5'-triphosphate = RNA(n+1) + diphosphate. Its function is as follows. DNA-dependent RNA polymerase catalyzes the transcription of DNA into RNA using the four ribonucleoside triphosphates as substrates. This is DNA-directed RNA polymerase subunit beta' from Actinobacillus pleuropneumoniae serotype 7 (strain AP76).